The chain runs to 386 residues: Histidinol-phosphate aminotransferase (386 aa).

K240 carries the post-translational modification N6-(pyridoxal phosphate)lysine.

It belongs to the class-II pyridoxal-phosphate-dependent aminotransferase family. Histidinol-phosphate aminotransferase subfamily. As to quaternary structure, homodimer. The cofactor is pyridoxal 5'-phosphate.

The enzyme catalyses L-histidinol phosphate + 2-oxoglutarate = 3-(imidazol-4-yl)-2-oxopropyl phosphate + L-glutamate. It functions in the pathway amino-acid biosynthesis; L-histidine biosynthesis; L-histidine from 5-phospho-alpha-D-ribose 1-diphosphate: step 7/9. The protein is Histidinol-phosphate aminotransferase of Bifidobacterium longum (strain NCC 2705).